A 172-amino-acid polypeptide reads, in one-letter code: RNA silencing suppressor p19 (172 aa).

The segment covering 1-20 (MERAIQGNDAREQANSERWD) has biased composition (basic and acidic residues). Residues 1–38 (MERAIQGNDAREQANSERWDGGSGGTTSPFKLPDESPS) are disordered.

Belongs to the tombusviruses protein p19 family. As to quaternary structure, homodimer.

In terms of biological role, acts as a suppressor of RNA-mediated gene silencing, also known as post-transcriptional gene silencing (PTGS), a mechanism of plant viral defense that limits the accumulation of viral RNAs. Binds to short interfering RNAs (siRNAs) with high affinity. Acts as a molecular caliper to specifically select siRNAs based on the length of the duplex region of the RNA. The sequence is that of RNA silencing suppressor p19 from Capsicum annuum (Capsicum pepper).